A 617-amino-acid polypeptide reads, in one-letter code: UvrABC system protein C (617 aa).

The GIY-YIG domain occupies 22 to 100; it reads KLPGVYRFFD…IKALSPKYNI (79 aa). The region spanning 209–244 is the UVR domain; it reads DELTRTLQHKMQTAAANLQFEEAARYRDQIQALGIM.

Belongs to the UvrC family. In terms of assembly, interacts with UvrB in an incision complex.

It is found in the cytoplasm. In terms of biological role, the UvrABC repair system catalyzes the recognition and processing of DNA lesions. UvrC both incises the 5' and 3' sides of the lesion. The N-terminal half is responsible for the 3' incision and the C-terminal half is responsible for the 5' incision. In Neisseria meningitidis serogroup A / serotype 4A (strain DSM 15465 / Z2491), this protein is UvrABC system protein C.